We begin with the raw amino-acid sequence, 280 residues long: MKKTALTIITIALGSLGAVYFLPSEPAAQKDIRATSQHDTSVDNTSAKAFLDYSLSTLGEKPLQTITQDVVREERALGELQLDEQLFALYLRYKQALADLDIEITGSDIISLETLHQAILDLQREYFSAQQIDLIFGEENQLRALALEKARLSEQGYSAEEQKQLWRDHLALQPEYVQESDANRRLMSELAQGEDAQTTYLKRVELVGEAGAQRLEVLDQNRAEFDRVFQHYLVQRSAILDDLGLSDEQKHKQITMLRETSFDAKQWRRIEALERIADGG.

Residues 5–22 (ALTIITIALGSLGAVYFL) traverse the membrane as a helical segment.

Belongs to the lipase chaperone family.

It is found in the cell inner membrane. May be involved in the folding of the extracellular lipase during its passage through the periplasm. The protein is Lipase chaperone (lifO) of Vibrio vulnificus (strain CMCP6).